The sequence spans 348 residues: Ferredoxin--NADP reductase 1 (348 aa).

7 residues coordinate FAD: E36, K44, Y48, I88, P123, D285, and S326. The disordered stretch occupies residues 329–348 (EKFKKKNEQLKQEKQAQLMN).

It belongs to the ferredoxin--NADP reductase type 2 family. Homodimer. FAD is required as a cofactor.

The enzyme catalyses 2 reduced [2Fe-2S]-[ferredoxin] + NADP(+) + H(+) = 2 oxidized [2Fe-2S]-[ferredoxin] + NADPH. The protein is Ferredoxin--NADP reductase 1 of Shouchella clausii (strain KSM-K16) (Alkalihalobacillus clausii).